Here is a 281-residue protein sequence, read N- to C-terminus: Protoheme IX farnesyltransferase (281 aa).

The next 9 helical transmembrane spans lie at 16–36 (TFLL…GADF), 38–58 (FVIA…INMW), 75–95 (VPAG…IFAI), 101–121 (FLVS…DIVV), 129–149 (KSPY…LGGW), 150–170 (VAVQ…LLWI), 202–224 (ASWA…YVLL), 228–250 (IFYL…KFAL), and 261–281 (YKLA…GVFL).

The protein belongs to the UbiA prenyltransferase family. Protoheme IX farnesyltransferase subfamily.

It is found in the cell membrane. The catalysed reaction is heme b + (2E,6E)-farnesyl diphosphate + H2O = Fe(II)-heme o + diphosphate. It participates in porphyrin-containing compound metabolism; heme O biosynthesis; heme O from protoheme: step 1/1. Functionally, converts heme B (protoheme IX) to heme O by substitution of the vinyl group on carbon 2 of heme B porphyrin ring with a hydroxyethyl farnesyl side group. The protein is Protoheme IX farnesyltransferase of Archaeoglobus fulgidus (strain ATCC 49558 / DSM 4304 / JCM 9628 / NBRC 100126 / VC-16).